We begin with the raw amino-acid sequence, 375 residues long: Aminomethyltransferase (375 aa).

Belongs to the GcvT family. As to quaternary structure, the glycine cleavage system is composed of four proteins: P, T, L and H.

The catalysed reaction is N(6)-[(R)-S(8)-aminomethyldihydrolipoyl]-L-lysyl-[protein] + (6S)-5,6,7,8-tetrahydrofolate = N(6)-[(R)-dihydrolipoyl]-L-lysyl-[protein] + (6R)-5,10-methylene-5,6,7,8-tetrahydrofolate + NH4(+). The glycine cleavage system catalyzes the degradation of glycine. The polypeptide is Aminomethyltransferase (Cupriavidus taiwanensis (strain DSM 17343 / BCRC 17206 / CCUG 44338 / CIP 107171 / LMG 19424 / R1) (Ralstonia taiwanensis (strain LMG 19424))).